The chain runs to 472 residues: Ribulose bisphosphate carboxylase large chain (472 aa).

N116 and T166 together coordinate substrate. Residue K168 is the Proton acceptor of the active site. A substrate-binding site is contributed by K170. Mg(2+)-binding residues include K194, D196, and E197. K194 carries the post-translational modification N6-carboxylysine. The active-site Proton acceptor is the H287. 3 residues coordinate substrate: R288, H320, and S372.

It belongs to the RuBisCO large chain family. Type I subfamily. In terms of assembly, heterohexadecamer of 8 large chains and 8 small chains. Mg(2+) is required as a cofactor.

The enzyme catalyses 2 (2R)-3-phosphoglycerate + 2 H(+) = D-ribulose 1,5-bisphosphate + CO2 + H2O. The catalysed reaction is D-ribulose 1,5-bisphosphate + O2 = 2-phosphoglycolate + (2R)-3-phosphoglycerate + 2 H(+). Functionally, ruBisCO catalyzes two reactions: the carboxylation of D-ribulose 1,5-bisphosphate, the primary event in carbon dioxide fixation, as well as the oxidative fragmentation of the pentose substrate. Both reactions occur simultaneously and in competition at the same active site. The polypeptide is Ribulose bisphosphate carboxylase large chain (Nitrobacter vulgaris).